The sequence spans 142 residues: ATP synthase epsilon chain (142 aa).

The protein belongs to the ATPase epsilon chain family. As to quaternary structure, F-type ATPases have 2 components, CF(1) - the catalytic core - and CF(0) - the membrane proton channel. CF(1) has five subunits: alpha(3), beta(3), gamma(1), delta(1), epsilon(1). CF(0) has three main subunits: a, b and c.

It localises to the cell inner membrane. Functionally, produces ATP from ADP in the presence of a proton gradient across the membrane. This is ATP synthase epsilon chain from Shewanella loihica (strain ATCC BAA-1088 / PV-4).